The sequence spans 96 residues: Large ribosomal subunit protein bL21 (96 aa).

The protein belongs to the bacterial ribosomal protein bL21 family. Part of the 50S ribosomal subunit. Contacts protein L20.

Functionally, this protein binds to 23S rRNA in the presence of protein L20. This chain is Large ribosomal subunit protein bL21, found in Prosthecochloris aestuarii (strain DSM 271 / SK 413).